A 216-amino-acid chain; its full sequence is DNA replication complex GINS protein psf1 (216 aa).

The tract at residues Gln-110 to Pro-133 is disordered. Gly residues predominate over residues Thr-111 to Thr-127.

Belongs to the GINS1/PSF1 family. In terms of assembly, component of the GINS complex which is a heterotetramer of div-26/sld5, drc-1/psf1, drc-2/psf2 and drc-3/psf3.

It localises to the nucleus. Its function is as follows. The GINS complex plays an essential role in the initiation of DNA replication. In Neurospora crassa (strain ATCC 24698 / 74-OR23-1A / CBS 708.71 / DSM 1257 / FGSC 987), this protein is DNA replication complex GINS protein psf1 (drc-1).